The chain runs to 217 residues: MASTELASDVYALPCGDDGTTALSTPVVVSVLASLLERHIARNERDQAAAADGEAARRARAFDSGTVLDMSLHAFLERFSRYANVSPQVYVVAYAYLDRLRRGDGVRVVSANAQRLLTTAILVASKFVEDRNYKNSYFAAVGGLTAAELSSLELDFLFLMQFRLNVSVSVFQSYCRHLEREVSYGGGYQVERCLKKALVCSGEAQAQQRQAASAAAQ.

This sequence belongs to the cyclin family. Cyclin U/P subfamily.

The sequence is that of Cyclin-P2-1 (CYCP2-1) from Oryza sativa subsp. japonica (Rice).